A 595-amino-acid chain; its full sequence is Neuroepithelial cell-transforming gene 1 protein (595 aa).

Methionine 1 bears the N-acetylmethionine mark. The segment at 1-42 (MEPEPAAQKQPRPRRRSRRVSMLSEEPAAGLPADTPGPAANE) is disordered. The segment at 1–74 (MEPEPAAQKQ…LKRKRREKDD (74 aa)) is necessary for nuclear localization. The Nuclear localization signal motif lies at 12–19 (RPRRRSRR). Serine 21 carries the phosphoserine modification. The short motif at 66 to 72 (KRKRREK) is the Nuclear localization signal element. 3 positions are modified to phosphoserine: serine 100, serine 106, and serine 122. The disordered stretch occupies residues 127–151 (GDHRSPASAQKSFSRSTVPTPTKRR). A compositionally biased stretch (polar residues) spans 133 to 146 (ASAQKSFSRSTVPT). A DH domain is found at 174–356 (KRQEAIYELS…QGVLSDINLK (183 aa)). The 116-residue stretch at 386 to 501 (VLLCHGELKN…WFNCIRAAIA (116 aa)) folds into the PH domain. At serine 508 the chain carries Phosphoserine. The interval 555 to 595 (CGSSVQTVEDTRNMKAQRPQPGLRRARDKAQSGGKKKETLV) is disordered.

As to quaternary structure, interacts with RHOA in its GTP- and GDP-bound states, and with CDC42 in its GTP-bound state. Interacts with the PDZ 1 domain of BAIAP1.

The protein localises to the cytoplasm. The protein resides in the nucleus. In terms of biological role, acts as a guanine nucleotide exchange factor (GEF) for RhoA GTPase. May be involved in activation of the SAPK/JNK pathway. Stimulates genotoxic stress-induced RHOB activity in breast cancer cells leading to their cell death. The sequence is that of Neuroepithelial cell-transforming gene 1 protein (Net1) from Mus musculus (Mouse).